The sequence spans 267 residues: Apolipoprotein A-I (267 aa).

An N-terminal signal peptide occupies residues 1–18; sequence MKAAVLTLAVLFLTGSQA. Repeat copies occupy residues 68–89 and 90–111. The interval 68–267 is 10 X approximate tandem repeats; it reads LKLLDNWDSL…EEYAKKLSSQ (200 aa). A Methionine sulfoxide modification is found at methionine 110. One copy of the 3; half-length repeat lies at 112-122; sequence KDLEEVKAKVQ. Repeat copies occupy residues 123-144, 145-166, 167-188, 189-210, and 211-232. The 9; half-length repeat unit spans residues 233–243; that stretch reads PALEDLRQGLL. Residues 244 to 267 form repeat 10; sequence PVLESFKVSFLSALEEYAKKLSSQ.

Belongs to the apolipoprotein A1/A4/E family. Homodimer. Interacts with APOA1BP and CLU. Component of a sperm activating protein complex (SPAP), consisting of APOA1, an immunoglobulin heavy chain, an immunoglobulin light chain and albumin. Interacts with NDRG1. Interacts with SCGB3A2. Interacts with NAXE and YJEFN3. In terms of processing, glycosylated. Post-translationally, palmitoylated. Phosphorylation sites are present in the extracellular medium.

Its subcellular location is the secreted. In terms of biological role, participates in the reverse transport of cholesterol from tissues to the liver for excretion by promoting cholesterol efflux from tissues and by acting as a cofactor for the lecithin cholesterol acyltransferase (LCAT). As part of the SPAP complex, activates spermatozoa motility. The protein is Apolipoprotein A-I (APOA1) of Cebus imitator (Panamanian white-faced capuchin).